The primary structure comprises 481 residues: 4-O-methyl-glucuronoyl methylesterase (481 aa).

Residues 1–21 form the signal peptide; that stretch reads MVSQTVVSSLLVVLGAAGVRA. The region spanning 23-59 is the CBM1 domain; the sequence is QRQSLWGQCGGSGWSGPTLCVDGAWCNPQNQWYHQCI. Disulfide bonds link Cys-108–Cys-143, Cys-292–Cys-428, and Cys-324–Cys-400. The GXSYXG catalytic site motif motif lies at 291–296; sequence GCSRNG. Residue Ser-293 is the Nucleophile of the active site. Residues Lys-297, Gln-339, Glu-347, and Trp-391 each contribute to the substrate site. His-427 (proton donor/acceptor) is an active-site residue.

The protein belongs to the carbohydrate esterase 15 (CE15) family.

The protein resides in the secreted. The enzyme catalyses a 4-O-methyl-alpha-D-glucuronosyl ester derivative + H2O = 4-O-methyl-alpha-D-glucuronate derivative + an alcohol + H(+). Functionally, glucuronoyl esterase which may play a significant role in biomass degradation, as it is considered to disconnect hemicellulose from lignin through the hydrolysis of the ester bond between 4-O-methyl-D-glucuronic acid residues of glucuronoxylans and aromatic alcohols of lignin. The chain is 4-O-methyl-glucuronoyl methylesterase from Podospora anserina (strain S / ATCC MYA-4624 / DSM 980 / FGSC 10383) (Pleurage anserina).